The chain runs to 418 residues: Tyrosine--tRNA ligase (418 aa).

Position 38 (tyrosine 38) interacts with L-tyrosine. The short motif at cysteine 43–serine 52 is the 'HIGH' region element. 2 residues coordinate L-tyrosine: tyrosine 175 and glutamine 179. A 'KMSKS' region motif is present at residues lysine 235–threonine 239. Residue lysine 238 participates in ATP binding. One can recognise an S4 RNA-binding domain in the interval leucine 348–methionine 413.

It belongs to the class-I aminoacyl-tRNA synthetase family. TyrS type 1 subfamily. As to quaternary structure, homodimer.

It localises to the cytoplasm. The enzyme catalyses tRNA(Tyr) + L-tyrosine + ATP = L-tyrosyl-tRNA(Tyr) + AMP + diphosphate + H(+). Functionally, catalyzes the attachment of tyrosine to tRNA(Tyr) in a two-step reaction: tyrosine is first activated by ATP to form Tyr-AMP and then transferred to the acceptor end of tRNA(Tyr). In Ehrlichia canis (strain Jake), this protein is Tyrosine--tRNA ligase.